The following is a 100-amino-acid chain: uncharacterized protein (100 aa).

The disordered stretch occupies residues 1–86 (MRGTRRGPSG…RHRPPEVTEP (86 aa)). Residues 35 to 48 (DTPPPRAPPPPPPL) show a composition bias toward pro residues.

This is an uncharacterized protein from Human herpesvirus 6A (strain Uganda-1102) (HHV-6 variant A).